Reading from the N-terminus, the 120-residue chain is Immunoglobulin lambda variable 2-14 (120 aa).

The N-terminal stretch at 1 to 19 is a signal peptide; the sequence is MAWALLLLTLLTQGTGSWA. Gln-20 carries the post-translational modification Pyrrolidone carboxylic acid. A framework-1 region spans residues 20–44; it reads QSALTQPASVSGSPGQSITISCTGT. An Ig-like domain is found at 20-119; the sequence is QSALTQPASV…SSYTSSSTLH (100 aa). Cys-41 and Cys-109 are joined by a disulfide. A complementarity-determining-1 region spans residues 45-53; that stretch reads SSDVGGYNY. The segment at 54–70 is framework-2; it reads VSWYQQHPGKAPKLMIY. The segment at 71 to 73 is complementarity-determining-2; the sequence is EVS. A framework-3 region spans residues 74–109; it reads NRPSGVSNRFSGSKSGNTASLTISGLQAEDEADYYC. A complementarity-determining-3 region spans residues 110 to 119; it reads SSYTSSSTLH.

As to quaternary structure, immunoglobulins are composed of two identical heavy chains and two identical light chains; disulfide-linked.

It is found in the secreted. Its subcellular location is the cell membrane. V region of the variable domain of immunoglobulin light chains that participates in the antigen recognition. Immunoglobulins, also known as antibodies, are membrane-bound or secreted glycoproteins produced by B lymphocytes. In the recognition phase of humoral immunity, the membrane-bound immunoglobulins serve as receptors which, upon binding of a specific antigen, trigger the clonal expansion and differentiation of B lymphocytes into immunoglobulins-secreting plasma cells. Secreted immunoglobulins mediate the effector phase of humoral immunity, which results in the elimination of bound antigens. The antigen binding site is formed by the variable domain of one heavy chain, together with that of its associated light chain. Thus, each immunoglobulin has two antigen binding sites with remarkable affinity for a particular antigen. The variable domains are assembled by a process called V-(D)-J rearrangement and can then be subjected to somatic hypermutations which, after exposure to antigen and selection, allow affinity maturation for a particular antigen. The sequence is that of Immunoglobulin lambda variable 2-14 from Homo sapiens (Human).